A 758-amino-acid chain; its full sequence is Probable serine/threonine-protein kinase HAL5-like (758 aa).

Disordered stretches follow at residues 1–170 (MGTV…SADD) and 189–252 (IDNA…HRGR). A compositionally biased stretch (polar residues) spans 22–57 (RSISGSIKSLFKPSSVQNSTPTVSPHESSPPLGNSD). The span at 58–69 (NLKKLVDTKRAE) shows a compositional bias: basic and acidic residues. Low complexity predominate over residues 129-153 (SSPRQSSSTNDRSSITSATSSVTSA). Residues 216–226 (DKNFESSEYEI) are compositionally biased toward basic and acidic residues. Residues 227 to 247 (RSNSLSRIHSTPQNESPTVNN) show a composition bias toward polar residues. The Protein kinase domain maps to 442–744 (KSMGVVLGHG…IDQLLQSPWM (303 aa)). Residues 448 to 456 (LGHGAYGVV) and K485 each bind ATP. Residue D595 is the Proton acceptor of the active site.

Belongs to the protein kinase superfamily. CAMK Ser/Thr protein kinase family. NPR/HAL subfamily. HAL5 sub-subfamily.

The enzyme catalyses L-seryl-[protein] + ATP = O-phospho-L-seryl-[protein] + ADP + H(+). It carries out the reaction L-threonyl-[protein] + ATP = O-phospho-L-threonyl-[protein] + ADP + H(+). This chain is Probable serine/threonine-protein kinase HAL5-like, found in Vanderwaltozyma polyspora (strain ATCC 22028 / DSM 70294 / BCRC 21397 / CBS 2163 / NBRC 10782 / NRRL Y-8283 / UCD 57-17) (Kluyveromyces polysporus).